The primary structure comprises 340 residues: Delta-aminolevulinic acid dehydratase (340 aa).

Positions 133, 135, and 143 each coordinate Zn(2+). The Schiff-base intermediate with substrate role is filled by K210. 2 residues coordinate 5-aminolevulinate: R220 and R232. K263 functions as the Schiff-base intermediate with substrate in the catalytic mechanism. Residues S290 and Y329 each contribute to the 5-aminolevulinate site.

This sequence belongs to the ALAD family. As to quaternary structure, homooctamer. Requires Zn(2+) as cofactor.

It carries out the reaction 2 5-aminolevulinate = porphobilinogen + 2 H2O + H(+). It functions in the pathway porphyrin-containing compound metabolism; protoporphyrin-IX biosynthesis; coproporphyrinogen-III from 5-aminolevulinate: step 1/4. Functionally, catalyzes an early step in the biosynthesis of tetrapyrroles. Binds two molecules of 5-aminolevulinate per subunit, each at a distinct site, and catalyzes their condensation to form porphobilinogen. This Candida glabrata (strain ATCC 2001 / BCRC 20586 / JCM 3761 / NBRC 0622 / NRRL Y-65 / CBS 138) (Yeast) protein is Delta-aminolevulinic acid dehydratase (HEM2).